The sequence spans 87 residues: U-scoloptoxin(23)-Er1a (87 aa).

Positions 1-29 (MSLIVVRTHSFLFVLVLLLFASVFHSVDS) are cleaved as a signal peptide. Positions 32 to 54 (FNPNGRYGRRDSASALSDASENK) are disordered.

Belongs to the scoloptoxin-23 family. In terms of tissue distribution, expressed by the venom gland.

It localises to the secreted. In Ethmostigmus rubripes (Giant centipede), this protein is U-scoloptoxin(23)-Er1a.